Reading from the N-terminus, the 148-residue chain is Arginine repressor (148 aa).

This sequence belongs to the ArgR family.

It localises to the cytoplasm. It participates in amino-acid biosynthesis; L-arginine biosynthesis [regulation]. In terms of biological role, regulates arginine biosynthesis genes. This Chlorobium phaeovibrioides (strain DSM 265 / 1930) (Prosthecochloris vibrioformis (strain DSM 265)) protein is Arginine repressor.